Here is a 257-residue protein sequence, read N- to C-terminus: Ribonuclease HII (257 aa).

Positions 71 to 257 (SLIAGIDEVG…TSFEPIKSML (187 aa)) constitute an RNase H type-2 domain. A divalent metal cation is bound by residues Asp-77, Glu-78, and Asp-172.

It belongs to the RNase HII family. Mn(2+) is required as a cofactor. Mg(2+) serves as cofactor.

The protein localises to the cytoplasm. The catalysed reaction is Endonucleolytic cleavage to 5'-phosphomonoester.. Its function is as follows. Endonuclease that specifically degrades the RNA of RNA-DNA hybrids. The protein is Ribonuclease HII of Streptococcus uberis (strain ATCC BAA-854 / 0140J).